Reading from the N-terminus, the 259-residue chain is 1,2-dihydroxy-1,2-dihydronaphthalene dehydrogenase (259 aa).

NAD(+) contacts are provided by residues 8 to 35 (AITG…SALV) and Asp-58. Residue Ser-140 participates in substrate binding. Residue Tyr-153 is the Proton acceptor of the active site. Lys-157 provides a ligand contact to NAD(+).

It belongs to the short-chain dehydrogenases/reductases (SDR) family.

The catalysed reaction is (1R,2S)-1,2-dihydronaphthalene-1,2-diol + NAD(+) = naphthalene-1,2-diol + NADH + H(+). Its pathway is aromatic compound metabolism; naphthalene degradation. Catalyzes the oxidation of naphthalene dihydrodiol into 1,2-dihydroxynaphthalene. This chain is 1,2-dihydroxy-1,2-dihydronaphthalene dehydrogenase, found in Ralstonia sp.